Consider the following 81-residue polypeptide: Photosystem I iron-sulfur center (81 aa).

4Fe-4S ferredoxin-type domains are found at residues 1–31 (MSHK…MVPW) and 39–68 (IASS…IRVY). Positions 11, 14, 17, 21, 48, 51, 54, and 58 each coordinate [4Fe-4S] cluster.

The cyanobacterial PSI reaction center is composed of one copy each of PsaA,B,C,D,E,F,I,J,K,L,M and X, and forms trimeric complexes. [4Fe-4S] cluster is required as a cofactor.

The protein localises to the cellular thylakoid membrane. The catalysed reaction is reduced [plastocyanin] + hnu + oxidized [2Fe-2S]-[ferredoxin] = oxidized [plastocyanin] + reduced [2Fe-2S]-[ferredoxin]. Functionally, apoprotein for the two 4Fe-4S centers FA and FB of photosystem I (PSI); essential for photochemical activity. FB is the terminal electron acceptor of PSI, donating electrons to ferredoxin. The C-terminus interacts with PsaA/B/D and helps assemble the protein into the PSI complex. Required for binding of PsaD and PsaE to PSI. PSI is a plastocyanin/cytochrome c6-ferredoxin oxidoreductase, converting photonic excitation into a charge separation, which transfers an electron from the donor P700 chlorophyll pair to the spectroscopically characterized acceptors A0, A1, FX, FA and FB in turn. This is Photosystem I iron-sulfur center from Rippkaea orientalis (strain PCC 8801 / RF-1) (Cyanothece sp. (strain PCC 8801)).